The primary structure comprises 41 residues: Photosystem II reaction center protein Y (41 aa).

Residue methionine 1 is modified to N-formylmethionine. Residues 1 to 4 (MDWR) are Lumenal-facing. The chain crosses the membrane as a helical span at residues 5–23 (VLVVLLPVLLAAGWAVRNI). The Cytoplasmic portion of the chain corresponds to 24–41 (LPYAVKQVQKLLQKAKAA).

This sequence belongs to the PsbY family. PSII is composed of 1 copy each of membrane proteins PsbA, PsbB, PsbC, PsbD, PsbE, PsbF, PsbH, PsbI, PsbJ, PsbK, PsbL, PsbM, PsbT, PsbX, PsbY, PsbZ, Psb30/Ycf12, peripheral proteins PsbO, CyanoQ (PsbQ), PsbU, PsbV and a large number of cofactors. It forms dimeric complexes. This protein is only loosely associated with PSII, and is not often found in crystals. Found on the exterior of the PSII dimer, near cytochrome b559 (psbE and psbF). Requires PSII binds multiple chlorophylls, carotenoids and specific lipids. as cofactor.

Its subcellular location is the cellular thylakoid membrane. Loosely associated component of the core of photosystem II, it is not always seen in crystals. PSII is a light-driven water plastoquinone oxidoreductase, using light energy to abstract electrons from H(2)O, generating a proton gradient subsequently used for ATP formation. In Thermosynechococcus vestitus (strain NIES-2133 / IAM M-273 / BP-1), this protein is Photosystem II reaction center protein Y.